A 165-amino-acid chain; its full sequence is Protein SprT (165 aa).

The SprT-like domain occupies 10–157; the sequence is EACYRQAEDF…YCRRCKATLV (148 aa). Position 69 (H69) interacts with Zn(2+). E70 is a catalytic residue. H73 contacts Zn(2+).

This sequence belongs to the SprT family. It depends on Zn(2+) as a cofactor.

It localises to the cytoplasm. The chain is Protein SprT from Pseudomonas paraeruginosa (strain DSM 24068 / PA7) (Pseudomonas aeruginosa (strain PA7)).